We begin with the raw amino-acid sequence, 447 residues long: Probable glycine dehydrogenase (decarboxylating) subunit 1 (447 aa).

This sequence belongs to the GcvP family. N-terminal subunit subfamily. The glycine cleavage system is composed of four proteins: P, T, L and H. In this organism, the P 'protein' is a heterodimer of two subunits.

It carries out the reaction N(6)-[(R)-lipoyl]-L-lysyl-[glycine-cleavage complex H protein] + glycine + H(+) = N(6)-[(R)-S(8)-aminomethyldihydrolipoyl]-L-lysyl-[glycine-cleavage complex H protein] + CO2. Its function is as follows. The glycine cleavage system catalyzes the degradation of glycine. The P protein binds the alpha-amino group of glycine through its pyridoxal phosphate cofactor; CO(2) is released and the remaining methylamine moiety is then transferred to the lipoamide cofactor of the H protein. In Macrococcus caseolyticus (strain JCSC5402) (Macrococcoides caseolyticum), this protein is Probable glycine dehydrogenase (decarboxylating) subunit 1.